A 207-amino-acid chain; its full sequence is Dephospho-CoA kinase (207 aa).

Positions 4 to 203 (VIGLTGGIAS…EEGYIEKPNY (200 aa)) constitute a DPCK domain. An ATP-binding site is contributed by 12–17 (ASGKST).

The protein belongs to the CoaE family.

It is found in the cytoplasm. It carries out the reaction 3'-dephospho-CoA + ATP = ADP + CoA + H(+). It functions in the pathway cofactor biosynthesis; coenzyme A biosynthesis; CoA from (R)-pantothenate: step 5/5. Its function is as follows. Catalyzes the phosphorylation of the 3'-hydroxyl group of dephosphocoenzyme A to form coenzyme A. This chain is Dephospho-CoA kinase, found in Staphylococcus aureus (strain USA300).